A 361-amino-acid chain; its full sequence is Cytosolic Fe-S cluster assembly factor CFD1 (361 aa).

Gly37 to Ser44 is an ATP binding site. [4Fe-4S] cluster is bound by residues Cys218 and Cys221. Residues His293 to Gly314 form a disordered region.

Belongs to the Mrp/NBP35 ATP-binding proteins family. NUBP2/CFD1 subfamily. In terms of assembly, heterotetramer of 2 NBP35 and 2 CFD1 chains. [4Fe-4S] cluster serves as cofactor.

It localises to the cytoplasm. Its function is as follows. Component of the cytosolic iron-sulfur (Fe/S) protein assembly (CIA) machinery. Required for maturation of extramitochondrial Fe-S proteins. The NBP35-CFD1 heterotetramer forms a Fe-S scaffold complex, mediating the de novo assembly of an Fe-S cluster and its transfer to target apoproteins. This Mycosarcoma maydis (Corn smut fungus) protein is Cytosolic Fe-S cluster assembly factor CFD1.